A 291-amino-acid polypeptide reads, in one-letter code: Sulfotransferase 1A1 (291 aa).

Residue 44–49 (KSGTNW) participates in 3'-phosphoadenylyl sulfate binding. 102-104 (KTH) contributes to the substrate binding site. The active-site Proton acceptor is H104. Residues R126, S134, Y189, 223–228 (TSFKKM), and 251–255 (FMRKG) each bind 3'-phosphoadenylyl sulfate. At S134 the chain carries Phosphoserine.

This sequence belongs to the sulfotransferase 1 family. In terms of assembly, homodimer. As to expression, expressed in brain, colon, liver, and small intestine of mice colonized with B.ovatus and L.plantarum.

It is found in the cytoplasm. The catalysed reaction is a phenol + 3'-phosphoadenylyl sulfate = an aryl sulfate + adenosine 3',5'-bisphosphate + H(+). The enzyme catalyses 17beta-estradiol + 3'-phosphoadenylyl sulfate = 17beta-estradiol 3-sulfate + adenosine 3',5'-bisphosphate + H(+). It catalyses the reaction 4-ethylphenol + 3'-phosphoadenylyl sulfate = 4-ethylphenyl sulfate + adenosine 3',5'-bisphosphate + H(+). It carries out the reaction 4-nitrophenol + 3'-phosphoadenylyl sulfate = 4-nitrophenyl sulfate + adenosine 3',5'-bisphosphate. The catalysed reaction is dopamine + 3'-phosphoadenylyl sulfate = dopamine 3-O-sulfate + adenosine 3',5'-bisphosphate + H(+). The enzyme catalyses dopamine + 3'-phosphoadenylyl sulfate = dopamine 4-O-sulfate + adenosine 3',5'-bisphosphate + H(+). It catalyses the reaction 3,3',5-triiodo-L-thyronine + 3'-phosphoadenylyl sulfate = 3,3',5-triiodo-L-thyronine sulfate + adenosine 3',5'-bisphosphate + H(+). It carries out the reaction 3,3',5'-triiodo-L-thyronine + 3'-phosphoadenylyl sulfate = 3,3',5'-triiodo-L-thyronine sulfate + adenosine 3',5'-bisphosphate + H(+). The catalysed reaction is 3,3'-diiodo-L-thyronine + 3'-phosphoadenylyl sulfate = 3,3'-diiodo-L-thyronine sulfate + adenosine 3',5'-bisphosphate + H(+). The enzyme catalyses L-thyroxine + 3'-phosphoadenylyl sulfate = L-thyroxine sulfate + adenosine 3',5'-bisphosphate + H(+). In terms of biological role, sulfotransferase that utilizes 3'-phospho-5'-adenylyl sulfate (PAPS) as sulfonate donor to catalyze the sulfate conjugation of a wide variety of acceptor molecules bearing a hydroxyl or an amine group. Sulfonation increases the water solubility of most compounds, and therefore their renal excretion, but it can also result in bioactivation to form active metabolites. Displays broad substrate specificity for small phenolic compounds. Plays an important role in the sulfonation of endogenous molecules such as steroid hormones. Mediates also the metabolic activation of carcinogenic N-hydroxyarylamines leading to highly reactive intermediates capable of forming DNA adducts, potentially resulting in mutagenesis. May play a role in gut microbiota-host metabolic interaction. O-sulfonates 4-ethylphenol (4-EP), a dietary tyrosine-derived metabolite produced by gut bacteria. The product 4-EPS crosses the blood-brain barrier and may negatively regulate oligodendrocyte maturation and myelination, affecting the functional connectivity of different brain regions associated with the limbic system. Catalyzes the sulfate conjugation of dopamine. Catalyzes the sulfation of T4 (L-thyroxine/3,5,3',5'-tetraiodothyronine), T3 (3,5,3'-triiodothyronine), rT3 (3,3',5'-triiodothyronine) and 3,3'-T2 (3,3'-diiodothyronine), with a substrate preference of 3,3'-T2 &gt; rT3 &gt; T3 &gt; T4. This chain is Sulfotransferase 1A1 (Sult1a1), found in Mus musculus (Mouse).